The sequence spans 336 residues: 4-hydroxy-3-methylbut-2-enyl diphosphate reductase (336 aa).

[4Fe-4S] cluster is bound at residue Cys37. (2E)-4-hydroxy-3-methylbut-2-enyl diphosphate contacts are provided by His66 and His99. Dimethylallyl diphosphate is bound by residues His66 and His99. Residues His66 and His99 each contribute to the isopentenyl diphosphate site. Position 121 (Cys121) interacts with [4Fe-4S] cluster. His149 contacts (2E)-4-hydroxy-3-methylbut-2-enyl diphosphate. His149 provides a ligand contact to dimethylallyl diphosphate. His149 contacts isopentenyl diphosphate. Residue Glu151 is the Proton donor of the active site. Thr189 provides a ligand contact to (2E)-4-hydroxy-3-methylbut-2-enyl diphosphate. [4Fe-4S] cluster is bound at residue Cys219. Ser247, Ser248, Asn249, and Ser292 together coordinate (2E)-4-hydroxy-3-methylbut-2-enyl diphosphate. Ser247, Ser248, Asn249, and Ser292 together coordinate dimethylallyl diphosphate. The isopentenyl diphosphate site is built by Ser247, Ser248, Asn249, and Ser292.

This sequence belongs to the IspH family. [4Fe-4S] cluster serves as cofactor.

The enzyme catalyses isopentenyl diphosphate + 2 oxidized [2Fe-2S]-[ferredoxin] + H2O = (2E)-4-hydroxy-3-methylbut-2-enyl diphosphate + 2 reduced [2Fe-2S]-[ferredoxin] + 2 H(+). The catalysed reaction is dimethylallyl diphosphate + 2 oxidized [2Fe-2S]-[ferredoxin] + H2O = (2E)-4-hydroxy-3-methylbut-2-enyl diphosphate + 2 reduced [2Fe-2S]-[ferredoxin] + 2 H(+). It participates in isoprenoid biosynthesis; dimethylallyl diphosphate biosynthesis; dimethylallyl diphosphate from (2E)-4-hydroxy-3-methylbutenyl diphosphate: step 1/1. The protein operates within isoprenoid biosynthesis; isopentenyl diphosphate biosynthesis via DXP pathway; isopentenyl diphosphate from 1-deoxy-D-xylulose 5-phosphate: step 6/6. Catalyzes the conversion of 1-hydroxy-2-methyl-2-(E)-butenyl 4-diphosphate (HMBPP) into a mixture of isopentenyl diphosphate (IPP) and dimethylallyl diphosphate (DMAPP). Acts in the terminal step of the DOXP/MEP pathway for isoprenoid precursor biosynthesis. This chain is 4-hydroxy-3-methylbut-2-enyl diphosphate reductase, found in Rhodococcus opacus (strain B4).